Here is a 1275-residue protein sequence, read N- to C-terminus: Inner capsid protein lambda-1 (1275 aa).

The span at 1–12 (MKRIPRKTKGKS) shows a compositional bias: basic residues. The segment at 1–149 (MKRIPRKTKG…DNEGGSNQKP (149 aa)) is disordered. Composition is skewed to basic and acidic residues over residues 18-35 (DSTE…DKQN) and 75-117 (NNDE…DKSK). Residues 118 to 149 (AQVTYSDTGINNANELSRSGNVDNEGGSNQKP) show a composition bias toward polar residues. The C2H2-type zinc finger occupies 181 to 203 (YQCHVCSAVLFSPLDLDAHVASH).

This sequence belongs to the orthoreovirus lambda-1 protein family. As to quaternary structure, homodecamer; each decamer is made up of two conformers of VP2, called VP2A and VP2B. 12 homodecamers assemble to form an icosahedral capsid. Interacts with protein mu-NS; in viral inclusions. The cofactor is Mg(2+). It depends on Mn(2+) as a cofactor.

Its subcellular location is the virion. It carries out the reaction ATP + H2O = ADP + phosphate + H(+). Its function is as follows. Inner capsid protein that self-assembles to form an icosahedral capsid with a T=2 symmetry, which consists of 120 copies of VP2, with channels at each of its five-fold vertices. This capsid constitutes the innermost concentric layer of the viral mature particle. Functionally, displays NTPase, RNA 5'-triphosphatase (RTPase) and RNA helicase activities. Helicase activity might be involved in unwinding or reannealing dsRNA during RNA synthesis. RTPase enzymatic activity represents the first step in RNA capping, which yields a 5'-diphosphorylated plus-strand RNA. The protein is Inner capsid protein lambda-1 (L3) of Reovirus type 3 (strain Dearing) (T3D).